We begin with the raw amino-acid sequence, 202 residues long: Ion-translocating oxidoreductase complex subunit G (202 aa).

The helical transmembrane segment at Ala11–Leu31 threads the bilayer. Thr177 carries the post-translational modification FMN phosphoryl threonine.

Belongs to the RnfG family. The complex is composed of six subunits: RnfA, RnfB, RnfC, RnfD, RnfE and RnfG. FMN is required as a cofactor.

Its subcellular location is the cell inner membrane. Functionally, part of a membrane-bound complex that couples electron transfer with translocation of ions across the membrane. The polypeptide is Ion-translocating oxidoreductase complex subunit G (Pasteurella multocida (strain Pm70)).